A 457-amino-acid polypeptide reads, in one-letter code: ATP synthase subunit beta (457 aa).

Glycine 147–threonine 154 is a binding site for ATP.

The protein belongs to the ATPase alpha/beta chains family. In terms of assembly, F-type ATPases have 2 components, CF(1) - the catalytic core - and CF(0) - the membrane proton channel. CF(1) has five subunits: alpha(3), beta(3), gamma(1), delta(1), epsilon(1). CF(0) has three main subunits: a(1), b(2) and c(9-12). The alpha and beta chains form an alternating ring which encloses part of the gamma chain. CF(1) is attached to CF(0) by a central stalk formed by the gamma and epsilon chains, while a peripheral stalk is formed by the delta and b chains.

Its subcellular location is the cell inner membrane. It catalyses the reaction ATP + H2O + 4 H(+)(in) = ADP + phosphate + 5 H(+)(out). Its function is as follows. Produces ATP from ADP in the presence of a proton gradient across the membrane. The catalytic sites are hosted primarily by the beta subunits. The chain is ATP synthase subunit beta from Haemophilus influenzae (strain PittEE).